The sequence spans 1087 residues: Exportin-7 (1087 aa).

Positions 30–96 (AEKALVEFTN…RNYVLNYLAT (67 aa)) constitute an Importin N-terminal domain.

The protein belongs to the exportin family.

It is found in the cytoplasm. The protein resides in the nucleus. Mediates the nuclear export of proteins (cargos) with broad substrate specificity. This chain is Exportin-7 (XPO7), found in Gallus gallus (Chicken).